The following is a 425-amino-acid chain: Stabilizer of axonemal microtubules 4 (425 aa).

Disordered regions lie at residues 93–126, 203–225, and 316–335; these read PLEV…PPTK, EGSG…SQAL, and KEPT…PCDP. Polar residues predominate over residues 207 to 222; that stretch reads FTKQSHQSPIVFQPPS.

In terms of assembly, microtubule inner protein component of sperm flagellar doublet microtubules. Interacts with PPP1CA.

Its subcellular location is the cell projection. It is found in the cilium. The protein localises to the cytoplasm. It localises to the cytoskeleton. The protein resides in the flagellum axoneme. This is Stabilizer of axonemal microtubules 4 from Homo sapiens (Human).